A 127-amino-acid polypeptide reads, in one-letter code: Holo-[acyl-carrier-protein] synthase (127 aa).

Mg(2+) contacts are provided by Asp9 and Glu58.

The protein belongs to the P-Pant transferase superfamily. AcpS family. Mg(2+) serves as cofactor.

It localises to the cytoplasm. The enzyme catalyses apo-[ACP] + CoA = holo-[ACP] + adenosine 3',5'-bisphosphate + H(+). Functionally, transfers the 4'-phosphopantetheine moiety from coenzyme A to a Ser of acyl-carrier-protein. This Shewanella sp. (strain W3-18-1) protein is Holo-[acyl-carrier-protein] synthase.